The following is a 341-amino-acid chain: Anthranilate phosphoribosyltransferase (341 aa).

Residues Gly-81, 84–85, 91–94, 109–117, and Ser-121 each bind 5-phospho-alpha-D-ribose 1-diphosphate; these read GD, NVST, and KHGNRSVSS. Gly-81 contributes to the anthranilate binding site. Ser-93 contributes to the Mg(2+) binding site. Residue Asn-112 coordinates anthranilate. Arg-167 is a binding site for anthranilate. Mg(2+)-binding residues include Asp-226 and Glu-227.

This sequence belongs to the anthranilate phosphoribosyltransferase family. In terms of assembly, homodimer. Mg(2+) serves as cofactor.

It carries out the reaction N-(5-phospho-beta-D-ribosyl)anthranilate + diphosphate = 5-phospho-alpha-D-ribose 1-diphosphate + anthranilate. The protein operates within amino-acid biosynthesis; L-tryptophan biosynthesis; L-tryptophan from chorismate: step 2/5. Functionally, catalyzes the transfer of the phosphoribosyl group of 5-phosphorylribose-1-pyrophosphate (PRPP) to anthranilate to yield N-(5'-phosphoribosyl)-anthranilate (PRA). The polypeptide is Anthranilate phosphoribosyltransferase (Saccharophagus degradans (strain 2-40 / ATCC 43961 / DSM 17024)).